The following is a 211-amino-acid chain: Mediator of RNA polymerase II transcription subunit 20 (211 aa).

The protein belongs to the Mediator complex subunit 20 family. In terms of assembly, component of the Mediator complex.

The protein localises to the nucleus. Its function is as follows. Component of the Mediator complex, a coactivator involved in the regulated transcription of nearly all RNA polymerase II-dependent genes. Mediator functions as a bridge to convey information from gene-specific regulatory proteins to the basal RNA polymerase II transcription machinery. Mediator is recruited to promoters by direct interactions with regulatory proteins and serves as a scaffold for the assembly of a functional preinitiation complex with RNA polymerase II and the general transcription factors. This is Mediator of RNA polymerase II transcription subunit 20 (SRB2) from Kluyveromyces lactis (strain ATCC 8585 / CBS 2359 / DSM 70799 / NBRC 1267 / NRRL Y-1140 / WM37) (Yeast).